The following is a 103-amino-acid chain: Phospholipase A2 large subunit (103 aa).

Residues Trp-7, Gly-9, and Gly-11 each contribute to the Ca(2+) site. Intrachain disulfides connect Cys-8/Cys-30, Cys-29/Cys-68, Cys-36/Cys-61, and Cys-59/Cys-96. Asn-16 is a glycosylation site (N-linked (GlcNAc...) asparagine). Residue His-33 is part of the active site. Position 34 (Asp-34) interacts with Ca(2+).

Belongs to the phospholipase A2 family. Group III subfamily. Heterodimer composed of a large subunit and a small subunit; disulfide-linked. Ca(2+) is required as a cofactor. As to expression, expressed by the venom gland.

Its subcellular location is the secreted. The catalysed reaction is a 1,2-diacyl-sn-glycero-3-phosphocholine + H2O = a 1-acyl-sn-glycero-3-phosphocholine + a fatty acid + H(+). Functionally, phospholipase toxin, which catalyzes the calcium-dependent hydrolysis of the 2-acyl groups in 3-sn-phosphoglycerides. Inhibits both skeletal (RYR1) and cardiac (RYR2) ryanodine receptors (calcium release channels). Probably blocks ryanodine receptors by generating a lipid product. The protein is Phospholipase A2 large subunit of Chersonesometrus fulvipes (Indian black scorpion).